A 217-amino-acid chain; its full sequence is TPA-induced transmembrane protein (217 aa).

The segment at 1-37 (MDLAQPSQPVDELELSVLERQPEENTPLNGADKVFPS) is disordered. Residues 66 to 86 (LWMIITSIFLGVITVIIIGLC) form a helical membrane-spanning segment.

As to quaternary structure, interacts with LIPH. As to expression, detected predominantly in the skin, with strongest expression in the inner root sheath of the hair follicle.

The protein localises to the endoplasmic reticulum. The protein resides in the cell membrane. Its function is as follows. Has a role in LIPH-mediated synthesis of 2-acyl lysophosphatidic acid (LPA). LPA is a bioactive lipid mediator involved in different biological processes, and necessary to promote hair formation and growth. The chain is TPA-induced transmembrane protein (TTMP) from Homo sapiens (Human).